The chain runs to 41 residues: Photosystem I reaction center subunit IX (41 aa).

A helical membrane pass occupies residues 7–27 (YLSSAPILATIWFAITAGILI).

Belongs to the PsaJ family.

Its subcellular location is the cellular thylakoid membrane. Functionally, may help in the organization of the PsaE and PsaF subunits. In Synechococcus sp. (strain ATCC 27144 / PCC 6301 / SAUG 1402/1) (Anacystis nidulans), this protein is Photosystem I reaction center subunit IX.